The following is a 99-amino-acid chain: Bacterial microcompartment shell vertex protein EutN (99 aa).

A BMV domain is found at 5–87 (MKLAVVTGQI…VDLCVIGIVD (83 aa)).

The protein belongs to the CcmL/EutN family. In terms of assembly, homopentamer with a small central pore.

It is found in the bacterial microcompartment. It participates in amine and polyamine degradation; ethanolamine degradation. In terms of biological role, probably forms vertices in the bacterial microcompartment (BMC) shell dedicated to ethanolamine degradation. Expression of eutK, eutL, eutM, eutN, eutS (eutSMNLK) in E.coli leads to formation of a single BMC. Coexpression of eutQ with eutSMNLK permits E.coli to make cells with more than one mobile BMC, as is usual in vivo. It may be involved in transporting positively charged molecules into and out of the BMC. Functionally, the ethanolamine (EA) catabolic bacterial microcompartment (BMC) probably concentrates low levels of ethanolamine catabolic enzymes, concentrates volatile reaction intermediates, keeps the level of toxic acetaldehyde low, generates enough acetyl-CoA to support cell growth, and maintains a pool of free coenzyme A (CoA) and NAD. Expression of the eut operon allows this bacteria to use ethanolamine (EA) as a carbon, nitrogen and energy source. It relies on cobalamin (vitamin B12) both as a cofactor for the ethanolamine ammonia-lyase (EAL) activity and to induce the operon. EA enhances bacterial survival in macrophages in a concentration-dependent manner, suggesting it is an important nutrient during infection. This chain is Bacterial microcompartment shell vertex protein EutN, found in Salmonella typhimurium (strain LT2 / SGSC1412 / ATCC 700720).